The following is a 354-amino-acid chain: Ferredoxin--NADP reductase (354 aa).

Residues Asp42, Gln50, Tyr55, Ile95, Phe130, Asp299, and Thr339 each coordinate FAD.

This sequence belongs to the ferredoxin--NADP reductase type 2 family. In terms of assembly, homodimer. The cofactor is FAD.

It carries out the reaction 2 reduced [2Fe-2S]-[ferredoxin] + NADP(+) + H(+) = 2 oxidized [2Fe-2S]-[ferredoxin] + NADPH. The polypeptide is Ferredoxin--NADP reductase (Acidovorax sp. (strain JS42)).